The following is a 335-amino-acid chain: Phosphate acyltransferase (335 aa).

The protein belongs to the PlsX family. Homodimer. Probably interacts with PlsY.

The protein localises to the cytoplasm. It carries out the reaction a fatty acyl-[ACP] + phosphate = an acyl phosphate + holo-[ACP]. Its pathway is lipid metabolism; phospholipid metabolism. In terms of biological role, catalyzes the reversible formation of acyl-phosphate (acyl-PO(4)) from acyl-[acyl-carrier-protein] (acyl-ACP). This enzyme utilizes acyl-ACP as fatty acyl donor, but not acyl-CoA. This chain is Phosphate acyltransferase, found in Streptococcus equi subsp. equi (strain 4047).